The sequence spans 135 residues: Fatty acid-binding protein homolog 6 (135 aa).

A fatty acid contacts are provided by residues R110 and 130–132; that span reads REY.

Belongs to the calycin superfamily. Fatty-acid binding protein (FABP) family.

In Caenorhabditis elegans, this protein is Fatty acid-binding protein homolog 6 (lbp-6).